Here is a 387-residue protein sequence, read N- to C-terminus: Ubiquitin-conjugating enzyme E2 25 (387 aa).

Residues 117-164 (APPVRDDIDEGRGSDISDTTSEPIDDDMAGDGEVDDDDEEEEDDEDAD) are disordered. A compositionally biased stretch (basic and acidic residues) spans 120-131 (VRDDIDEGRGSD). Positions 139 to 164 (PIDDDMAGDGEVDDDDEEEEDDEDAD) are enriched in acidic residues. A UBC core domain is found at 214–380 (TATDRLMKEI…QQIHAKSGWY (167 aa)). C315 serves as the catalytic Glycyl thioester intermediate.

The protein belongs to the ubiquitin-conjugating enzyme family. In the embryo, expressed in precursor neuron and muscle cells and in other cells such as hypodermal cells. After hatching of L1 larvae and in all subsequent stages, strongest expression in pharyngeal muscle and anal muscle cells. In L4 larvae and adolescent hermaphrodites, also expressed in the vulval muscles. Expression also detected in all four nerve cords and in neurons with weaker levels in all body wall muscles.

The protein localises to the cytoplasm. The protein resides in the nucleus. The enzyme catalyses S-ubiquitinyl-[E1 ubiquitin-activating enzyme]-L-cysteine + [E2 ubiquitin-conjugating enzyme]-L-cysteine = [E1 ubiquitin-activating enzyme]-L-cysteine + S-ubiquitinyl-[E2 ubiquitin-conjugating enzyme]-L-cysteine.. The protein operates within protein modification; protein ubiquitination. Its function is as follows. Catalyzes the covalent attachment of ubiquitin to other proteins (Potential). Required for the maintenance of neuromuscular function. In Caenorhabditis elegans, this protein is Ubiquitin-conjugating enzyme E2 25.